Reading from the N-terminus, the 492-residue chain is Dynein regulatory complex subunit 2 (492 aa).

Coiled-coil stretches lie at residues Leu16–Val95, Val256–Ala318, and Leu373–Ser401.

It belongs to the DRC2 family. Component of the nexin-dynein regulatory complex (N-DRC).

It is found in the cytoplasm. The protein resides in the cytoskeleton. It localises to the flagellum basal body. The protein localises to the cell projection. Its subcellular location is the cilium. It is found in the flagellum. The protein resides in the flagellum axoneme. Its function is as follows. Component of the nexin-dynein regulatory complex (N-DRC), a key regulator of ciliary/flagellar motility which maintains the alignment and integrity of the distal axoneme and regulates microtubule sliding in motile axonemes. Plays a critical role in the assembly of N-DRC and also stabilizes the assembly of multiple inner dynein arms and radial spokes. Coassembles with DRC1 to form a central scaffold needed for assembly of the N-DRC and its attachment to the outer doublet microtubules. This chain is Dynein regulatory complex subunit 2 (ccdc65), found in Danio rerio (Zebrafish).